A 123-amino-acid polypeptide reads, in one-letter code: Large ribosomal subunit protein uL14 (123 aa).

This sequence belongs to the universal ribosomal protein uL14 family. Part of the 50S ribosomal subunit. Forms a cluster with proteins L3 and L19. In the 70S ribosome, L14 and L19 interact and together make contacts with the 16S rRNA in bridges B5 and B8.

In terms of biological role, binds to 23S rRNA. Forms part of two intersubunit bridges in the 70S ribosome. This Yersinia pestis bv. Antiqua (strain Antiqua) protein is Large ribosomal subunit protein uL14.